We begin with the raw amino-acid sequence, 193 residues long: Threonylcarbamoyl-AMP synthase (193 aa).

Residues 14 to 193 (SRLQQRARKQ…IDLESGRVLR (180 aa)) enclose the YrdC-like domain.

This sequence belongs to the SUA5 family. TsaC subfamily.

It localises to the cytoplasm. The catalysed reaction is L-threonine + hydrogencarbonate + ATP = L-threonylcarbamoyladenylate + diphosphate + H2O. Required for the formation of a threonylcarbamoyl group on adenosine at position 37 (t(6)A37) in tRNAs that read codons beginning with adenine. Catalyzes the conversion of L-threonine, HCO(3)(-)/CO(2) and ATP to give threonylcarbamoyl-AMP (TC-AMP) as the acyladenylate intermediate, with the release of diphosphate. In Chromobacterium violaceum (strain ATCC 12472 / DSM 30191 / JCM 1249 / CCUG 213 / NBRC 12614 / NCIMB 9131 / NCTC 9757 / MK), this protein is Threonylcarbamoyl-AMP synthase.